The following is a 306-amino-acid chain: UDP-N-acetylenolpyruvoylglucosamine reductase (306 aa).

Residues 33 to 197 form the FAD-binding PCMH-type domain; that stretch reads TGGEADFYLS…LEAAFTLEPG (165 aa). Arg176 is an active-site residue. The Proton donor role is filled by Ser226. Glu296 is an active-site residue.

The protein belongs to the MurB family. Requires FAD as cofactor.

It is found in the cytoplasm. The catalysed reaction is UDP-N-acetyl-alpha-D-muramate + NADP(+) = UDP-N-acetyl-3-O-(1-carboxyvinyl)-alpha-D-glucosamine + NADPH + H(+). The protein operates within cell wall biogenesis; peptidoglycan biosynthesis. Cell wall formation. The chain is UDP-N-acetylenolpyruvoylglucosamine reductase from Staphylococcus epidermidis (strain ATCC 35984 / DSM 28319 / BCRC 17069 / CCUG 31568 / BM 3577 / RP62A).